Consider the following 641-residue polypeptide: UPF0329 protein ECU11_0030 (641 aa).

The segment covering 358–387 (RQRKREEETERSVKELVGDEEKAKSKEEKA) has biased composition (basic and acidic residues). Positions 358-444 (RQRKREEETE…KGGKKKSKGG (87 aa)) are disordered. Over residues 435-444 (KGGKKKSKGG) the composition is skewed to basic residues.

The protein belongs to the UPF0329 family.

The protein is UPF0329 protein ECU11_0030 of Encephalitozoon cuniculi (strain GB-M1) (Microsporidian parasite).